We begin with the raw amino-acid sequence, 395 residues long: 8-amino-7-oxononanoate synthase (395 aa).

K24 contacts substrate. 111 to 112 (GF) provides a ligand contact to pyridoxal 5'-phosphate. Position 136 (H136) interacts with substrate. Pyridoxal 5'-phosphate-binding positions include S184, 209–212 (DDAH), and 240–243 (TLSK). An N6-(pyridoxal phosphate)lysine modification is found at K243. Substrate is bound at residue T357.

It belongs to the class-II pyridoxal-phosphate-dependent aminotransferase family. BioF subfamily. Homodimer. Pyridoxal 5'-phosphate serves as cofactor.

The catalysed reaction is 6-carboxyhexanoyl-[ACP] + L-alanine + H(+) = (8S)-8-amino-7-oxononanoate + holo-[ACP] + CO2. Its pathway is cofactor biosynthesis; biotin biosynthesis. Functionally, catalyzes the decarboxylative condensation of pimeloyl-[acyl-carrier protein] and L-alanine to produce 8-amino-7-oxononanoate (AON), [acyl-carrier protein], and carbon dioxide. This chain is 8-amino-7-oxononanoate synthase, found in Treponema denticola (strain ATCC 35405 / DSM 14222 / CIP 103919 / JCM 8153 / KCTC 15104).